The chain runs to 469 residues: 6-phosphofructo-2-kinase/fructose-2,6-bisphosphatase 4 (469 aa).

The segment at 1–249 (MASPRELTQN…YYLMNIHVTP (249 aa)) is 6-phosphofructo-2-kinase. Ser29 carries the phosphoserine; by PKC modification. An ATP-binding site is contributed by 46–54 (GLPARGKTY). Beta-D-fructose 6-phosphate is bound by residues Arg79 and Arg103. Residue Asp129 is part of the active site. 2 residues coordinate beta-D-fructose 6-phosphate: Thr131 and Arg137. Cys159 is a catalytic residue. 168 to 173 (NIVQVK) contacts ATP. Residues Lys173, Arg194, and Tyr198 each contribute to the beta-D-fructose 6-phosphate site. The segment at 250 to 469 (RSIYLCRHGE…EALVTVPAHQ (220 aa)) is fructose-2,6-bisphosphatase. Arg256 lines the beta-D-fructose 2,6-bisphosphate pocket. His257 (tele-phosphohistidine intermediate) is an active-site residue. The beta-D-fructose 2,6-bisphosphate site is built by Asn263, Gly269, and Arg306. Glu326 acts as the Proton donor/acceptor in catalysis. Residues Tyr337, Arg351, Lys355, Tyr366, Gln392, and Arg396 each contribute to the beta-D-fructose 2,6-bisphosphate site. Position 348–351 (348–351 (FALR)) interacts with ATP. ATP-binding positions include 392 to 396 (QAVMR) and Tyr428. Thr444 carries the post-translational modification Phosphothreonine; by PKC.

This sequence in the C-terminal section; belongs to the phosphoglycerate mutase family. Homodimer. In terms of tissue distribution, testis.

The enzyme catalyses beta-D-fructose 2,6-bisphosphate + H2O = beta-D-fructose 6-phosphate + phosphate. The catalysed reaction is beta-D-fructose 6-phosphate + ATP = beta-D-fructose 2,6-bisphosphate + ADP + H(+). Its activity is regulated as follows. The most important regulatory mechanism of these opposing activities is by phosphorylation and dephosphorylation of the enzyme. Functionally, synthesis and degradation of fructose 2,6-bisphosphate. The polypeptide is 6-phosphofructo-2-kinase/fructose-2,6-bisphosphatase 4 (Pfkfb4) (Rattus norvegicus (Rat)).